The chain runs to 163 residues: Antimicrobial peptide 2 (163 aa).

A signal peptide spans 1–22 (MLNMKSFALLMLFATLVGVTIA). 2 consecutive Chitin-binding type-1 domains span residues 26–66 (NGKC…EIEP) and 69–107 (AGQC…SCLP). 3 disulfide bridges follow: Cys-29–Cys-42, Cys-36–Cys-48, and Cys-41–Cys-55. Residues 58-67 (NTPLSEIEPT) constitute a propeptide that is removed on maturation. 4 disulfide bridges follow: Cys-72/Cys-83, Cys-77/Cys-89, Cys-82/Cys-96, and Cys-101/Cys-105. A propeptide spanning residues 100-163 (MCQGSCLPDM…QVEPAVTKAP (64 aa)) is cleaved from the precursor.

As to expression, expressed in roots, flowers, stem and leaves.

In terms of biological role, antimicrobial peptide. This Stellaria media (Common chickweed) protein is Antimicrobial peptide 2.